The following is a 397-amino-acid chain: Mitochondrial inner membrane magnesium transporter LPE10 (397 aa).

A mitochondrion-targeting transit peptide spans 1–48 (MLFIRQLSVIPKAPAFAKFFHTAGLVRQKLSDPNHLAILLQKNLAQRN). Residues 318-338 (LMLLGLRFSIGLLSLAGSIFI) traverse the membrane as a helical segment. The YGMN signature appears at 342–345 (YGMN). A helical membrane pass occupies residues 355 to 375 (VGFPVVSTLGVILMAYLFAFS).

The protein belongs to the CorA metal ion transporter (MIT) (TC 1.A.35) family. As to quaternary structure, forms homooligomers. Interacts with MRS2.

It localises to the mitochondrion inner membrane. Mitochondrial inner membrane magnesium transporter required for mitochondrial magnesium homeostasis. Modulates the conductance of the MRS2 channel. Involved in the splicing of mRNA group II introns in mitochondria by affecting mitochondrial magnesium concentrations, which are critical for group II intron splicing. In Kluyveromyces lactis (strain ATCC 8585 / CBS 2359 / DSM 70799 / NBRC 1267 / NRRL Y-1140 / WM37) (Yeast), this protein is Mitochondrial inner membrane magnesium transporter LPE10 (LPE10).